The sequence spans 437 residues: tRNA-2-methylthio-N(6)-dimethylallyladenosine synthase (437 aa).

Residues 1–115 (MKVYIETMGC…ISQVIHKEKA (115 aa)) enclose the MTTase N-terminal domain. The [4Fe-4S] cluster site is built by C10, C46, C78, C148, C152, and C155. In terms of domain architecture, Radical SAM core spans 134 to 367 (KKAQIRSLLN…QNRHKEILEE (234 aa)). In terms of domain architecture, TRAM spans 370–436 (KLEVGKTHVV…KGRLIATAKG (67 aa)).

Belongs to the methylthiotransferase family. MiaB subfamily. In terms of assembly, monomer. Requires [4Fe-4S] cluster as cofactor.

It localises to the cytoplasm. It catalyses the reaction N(6)-dimethylallyladenosine(37) in tRNA + (sulfur carrier)-SH + AH2 + 2 S-adenosyl-L-methionine = 2-methylsulfanyl-N(6)-dimethylallyladenosine(37) in tRNA + (sulfur carrier)-H + 5'-deoxyadenosine + L-methionine + A + S-adenosyl-L-homocysteine + 2 H(+). Catalyzes the methylthiolation of N6-(dimethylallyl)adenosine (i(6)A), leading to the formation of 2-methylthio-N6-(dimethylallyl)adenosine (ms(2)i(6)A) at position 37 in tRNAs that read codons beginning with uridine. In Helicobacter pylori (strain Shi470), this protein is tRNA-2-methylthio-N(6)-dimethylallyladenosine synthase.